The chain runs to 266 residues: Undecaprenyl-diphosphatase (266 aa).

Transmembrane regions (helical) follow at residues 2 to 22 (INILNAIILGIVQGITEFLPI), 39 to 59 (LPIIFDIYLHLATVLVIIIYY), 86 to 106 (LKLILLILIITIVTGVVGTFI), 112 to 132 (MFILPFILINFIITGILILML), 145 to 165 (ILLVGIFIGLMQGLGAFPGIS), 184 to 204 (AFEISFLSLIPIVFGAILFKY), 212 to 232 (MVLNFFEINLGALVAFVVGII), and 246 to 266 (LYYFSIYLFALSITFCCFFRI).

This sequence belongs to the UppP family.

It is found in the cell inner membrane. It carries out the reaction di-trans,octa-cis-undecaprenyl diphosphate + H2O = di-trans,octa-cis-undecaprenyl phosphate + phosphate + H(+). Catalyzes the dephosphorylation of undecaprenyl diphosphate (UPP). Confers resistance to bacitracin. This is Undecaprenyl-diphosphatase from Borrelia garinii subsp. bavariensis (strain ATCC BAA-2496 / DSM 23469 / PBi) (Borreliella bavariensis).